A 238-amino-acid chain; its full sequence is Triggering receptor expressed on myeloid cells 1 (238 aa).

A signal peptide spans 1 to 20 (MRSARLGRLLWMLFITEIQA). The Ig-like V-type domain maps to 21–129 (ATELPEEKYI…KDPIILFYPV (109 aa)). The Extracellular segment spans residues 21–210 (ATELPEEKYI…DITRDTEISL (190 aa)). The cysteines at positions 41 and 113 are disulfide-linked. N-linked (GlcNAc...) asparagine glycosylation occurs at Asn135. The tract at residues 141-169 (PASAETPTQSCSPTTTLPPTTTTNRHRPR) is disordered. Residues 146-163 (TPTQSCSPTTTLPPTTTT) are compositionally biased toward low complexity. Asn198 carries N-linked (GlcNAc...) asparagine glycosylation. A helical membrane pass occupies residues 211–231 (ILPAVCGLLSKSLVFIVLFVV). Over 232 to 238 (TRMSFTP) the chain is Cytoplasmic.

As to quaternary structure, monomer. Homomultimer; when activated. Interacts with TYROBP/DAP12. Interacts with TLR4.

The protein localises to the cell membrane. Functionally, cell surface receptor that plays important roles in innate and adaptive immunity by amplifying inflammatory responses. Upon activation by various ligands such as PGLYRP1, HMGB1 or HSP70, multimerizes and forms a complex with transmembrane adapter TYROBP/DAP12. In turn, initiates a SYK-mediated cascade of tyrosine phosphorylation, activating multiple downstream mediators such as BTK, MAPK1, MAPK3 or phospholipase C-gamma. This cascade promotes the neutrophil- and macrophage-mediated release of pro-inflammatory cytokines and/or chemokines, as well as their migration and thereby amplifies inflammatory responses that are triggered by bacterial and fungal infections. By also promoting the amplification of inflammatory signals that are initially triggered by Toll-like receptor (TLR) and NOD-like receptor engagement, plays a major role in the pathophysiology of acute and chronic inflammatory diseases of different etiologies including septic shock and atherosclerosis. The sequence is that of Triggering receptor expressed on myeloid cells 1 (TREM1) from Sus scrofa (Pig).